The sequence spans 373 residues: Ferroptosis suppressor protein 1 (373 aa).

The N-myristoyl glycine moiety is linked to residue G2. Residues V13 to L29 form a helical membrane-spanning segment. Residues G17 to G21, R53, and V81 each bind 6-hydroxy-FAD. N6-acetyllysine is present on K167. D284 lines the 6-hydroxy-FAD pocket.

This sequence belongs to the FAD-dependent oxidoreductase family. 6-hydroxy-FAD is required as a cofactor. In terms of processing, N-myristoylation at Gly-2 mediates the recruitment to lipid droplets and plasma membrane. Post-translationally, acetylation at Lys-167 prevents AIFM2 ubiquitination and degradation, thereby inhibiting ferroptosis. KAT2B mediates acetylation at Lys-167, while HDAC3 removes it. Ubiquitinated. AIFM2 undergoes 'Lys-29'-ubiquitination and proteasomal degradation, which is inhibited by acetylation at Lys-167.

Its subcellular location is the lipid droplet. The protein localises to the cell membrane. The protein resides in the cytoplasm. It localises to the mitochondrion membrane. It is found in the nucleus. The enzyme catalyses ubiquinone-10 + NADH + H(+) = ubiquinol-10 + NAD(+). It carries out the reaction phylloquinone + NADH + H(+) = phylloquinol + NAD(+). The catalysed reaction is menaquinone-4 + NADH + H(+) = menaquinol-4 + NAD(+). It catalyses the reaction menadione + NADH + H(+) = menadiol + NAD(+). The modification by 4-hydroxy-2-nonenal (HNE) adduction in mitochondria results in loss of the oxidoreductase activity and activation of a novel function in mitochondrial oxidative stress signaling. Functionally, a NAD(P)H-dependent oxidoreductase that acts as a key inhibitor of ferroptosis. At the plasma membrane, catalyzes reduction of coenzyme Q/ubiquinone-10 to ubiquinol-10, a lipophilic radical-trapping antioxidant that prevents lipid oxidative damage and consequently ferroptosis. Acts in parallel to GPX4 to suppress phospholipid peroxidation and ferroptosis. This anti-ferroptotic function is independent of cellular glutathione levels. Also acts as a potent radical-trapping antioxidant by mediating warfarin-resistant vitamin K reduction in the canonical vitamin K cycle: catalyzes NAD(P)H-dependent reduction of vitamin K (phylloquinone, menaquinone-4 and menadione) to hydroquinone forms. Hydroquinones act as potent radical-trapping antioxidants inhibitor of phospholipid peroxidation and ferroptosis. May play a role in mitochondrial stress signaling. Upon oxidative stress, associates with the lipid peroxidation end product 4-hydroxy-2-nonenal (HNE) forming a lipid adduct devoid of oxidoreductase activity, which then translocates from mitochondria into the nucleus triggering DNA damage and cell death. The polypeptide is Ferroptosis suppressor protein 1 (AIFM2) (Taeniopygia guttata (Zebra finch)).